The following is a 192-amino-acid chain: dTTP/UTP pyrophosphatase (192 aa).

Asp70 serves as the catalytic Proton acceptor.

The protein belongs to the Maf family. YhdE subfamily. Requires a divalent metal cation as cofactor.

It is found in the cytoplasm. It carries out the reaction dTTP + H2O = dTMP + diphosphate + H(+). The catalysed reaction is UTP + H2O = UMP + diphosphate + H(+). In terms of biological role, nucleoside triphosphate pyrophosphatase that hydrolyzes dTTP and UTP. May have a dual role in cell division arrest and in preventing the incorporation of modified nucleotides into cellular nucleic acids. This Clostridium perfringens (strain SM101 / Type A) protein is dTTP/UTP pyrophosphatase.